We begin with the raw amino-acid sequence, 353 residues long: MAIDENKQKALAAAMGQIEKQFGKGSIMRLGEDRSMDVETISTGSLSLDIALGAGGLPMGRIVEIYGPESSGKTTLTLQVIAAAQREGKTCAFIDAEHALDPVYARKLGVDIDNLLCSQPDTGEQALEICDALARSGAVDVIVVDSVAALTPKAEIEGEIGDSHMGLAARMMSQAMRKLAGNLKQSNTLLIFINQIRMKIGVMFGNPETTTGGNALKFYASVRLDIRRIGAVKEGDNVVGSETRVKVVKNKIAAPFKQAEFQILYGEGINFYGELVDLGVKEKLIEKAGAWYSYNGEKIGQGKANATTWLKENPATAKEIEKRVRELLLSNQNATPDFAVDDSEGVAETNEDF.

67–74 (GPESSGKT) is an ATP binding site.

Belongs to the RecA family.

It is found in the cytoplasm. In terms of biological role, can catalyze the hydrolysis of ATP in the presence of single-stranded DNA, the ATP-dependent uptake of single-stranded DNA by duplex DNA, and the ATP-dependent hybridization of homologous single-stranded DNAs. It interacts with LexA causing its activation and leading to its autocatalytic cleavage. This is Protein RecA from Salmonella paratyphi A (strain ATCC 9150 / SARB42).